Here is a 105-residue protein sequence, read N- to C-terminus: Met repressor (105 aa).

It belongs to the MetJ family. As to quaternary structure, homodimer.

The protein resides in the cytoplasm. Functionally, this regulatory protein, when combined with SAM (S-adenosylmethionine) represses the expression of the methionine regulon and of enzymes involved in SAM synthesis. This Actinobacillus pleuropneumoniae serotype 7 (strain AP76) protein is Met repressor.